We begin with the raw amino-acid sequence, 60 residues long: OPG024 protein (60 aa).

The disordered stretch occupies residues 1–60 (MSSKGGSSGGMWSVFIHGHDGSNKGSKTYTSGGGGMWGGGSSSGVKSGVNGGVKSGTGKI). Gly residues-rich tracts occupy residues 31 to 42 (SGGGGMWGGGSS) and 49 to 60 (VNGGVKSGTGKI).

The protein belongs to the orthopoxvirus OPG024 family.

This chain is OPG024 protein (OPG024), found in Vaccinia virus (strain Western Reserve) (VACV).